The following is a 311-amino-acid chain: MVNPLYHKHIISINDLCREELELVLRTAASLKSHPQPELLKHKVIASCFFEASTRTRLSFETSIHRLGASVVGFSDSSNTSLGKKGETLADTMSVISTYVDAIVMRHPQEGAARLATQFSGNVPVVNAGDGANQHPTQTLLDLFTIQETQGRLDNINIAMVGDLKYGRTVHSLTQALAKFNGNRFFFIAPDALAMPAYLLEMLAEKGIEYSLHESIEEVVPELDILYMTRVQKERLDPSEYANVKAQFVLRAADLNGAQDNLKVLHPLPRIDEITTDVDKTPYAYYFQQAGNGIFARQALLALVLNAELAL.

Carbamoyl phosphate-binding residues include R55 and T56. K85 serves as a coordination point for L-aspartate. The carbamoyl phosphate site is built by R106, H135, and Q138. Residues R168 and R230 each contribute to the L-aspartate site. L268 and P269 together coordinate carbamoyl phosphate.

It belongs to the aspartate/ornithine carbamoyltransferase superfamily. ATCase family. Heterododecamer (2C3:3R2) of six catalytic PyrB chains organized as two trimers (C3), and six regulatory PyrI chains organized as three dimers (R2).

It catalyses the reaction carbamoyl phosphate + L-aspartate = N-carbamoyl-L-aspartate + phosphate + H(+). It functions in the pathway pyrimidine metabolism; UMP biosynthesis via de novo pathway; (S)-dihydroorotate from bicarbonate: step 2/3. Functionally, catalyzes the condensation of carbamoyl phosphate and aspartate to form carbamoyl aspartate and inorganic phosphate, the committed step in the de novo pyrimidine nucleotide biosynthesis pathway. In Yersinia enterocolitica serotype O:8 / biotype 1B (strain NCTC 13174 / 8081), this protein is Aspartate carbamoyltransferase catalytic subunit.